A 433-amino-acid polypeptide reads, in one-letter code: MFDITLVHAREILDSRGNPTVEAEVTLSGGAVGRAAVPSGASTGEHEAVELRDGDNARYLGKGVLKAVENVEGEIAQALGGMDASQQRDIDMRMLDLDGTENKGRLGANAILAVSMASARAVANQLDIPLYRYLGGVNGNILPVPMMNILNGGAHADNNVDFQEFMAMPVGAESFSEALRWGAEVFHTLKGVLKKRGYNTAVGDEGGFAPSLKSNVEAIEVILEAIQQAGYTPGEQIAIALDPAASEFFKDGKYIFKKSDKSEKTSEQMVRWWSDWANKYPIVSIEDGLAEDDWEGWKLLTDELGDKIQLVGDDLFVTNPERLARGIDNGVANSILIKVNQIGTLSETLDAIEMARRNGYTAVISHRSGETEDTFIADLAVATGAGQIKTGSASRTDRVAKYNQLLRIEEQLGAGARFLGIGALNYDGDLSAE.

A (2R)-2-phosphoglycerate-binding site is contributed by Gln-163. Catalysis depends on Glu-205, which acts as the Proton donor. Residues Asp-242, Glu-286, and Asp-313 each coordinate Mg(2+). Positions 338, 367, 368, and 389 each coordinate (2R)-2-phosphoglycerate. The active-site Proton acceptor is the Lys-338.

It belongs to the enolase family. Requires Mg(2+) as cofactor.

The protein resides in the cytoplasm. Its subcellular location is the secreted. The protein localises to the cell surface. The catalysed reaction is (2R)-2-phosphoglycerate = phosphoenolpyruvate + H2O. Its pathway is carbohydrate degradation; glycolysis; pyruvate from D-glyceraldehyde 3-phosphate: step 4/5. Functionally, catalyzes the reversible conversion of 2-phosphoglycerate (2-PG) into phosphoenolpyruvate (PEP). It is essential for the degradation of carbohydrates via glycolysis. The chain is Enolase from Koribacter versatilis (strain Ellin345).